The following is a 335-amino-acid chain: Biotin synthase (335 aa).

One can recognise a Radical SAM core domain in the interval 46–274; it reads YKVQLASLFS…KSKIRLSAGR (229 aa). Positions 61, 65, and 68 each coordinate [4Fe-4S] cluster. Positions 105, 137, 197, and 269 each coordinate [2Fe-2S] cluster.

Belongs to the radical SAM superfamily. Biotin synthase family. Homodimer. [4Fe-4S] cluster is required as a cofactor. It depends on [2Fe-2S] cluster as a cofactor.

It catalyses the reaction (4R,5S)-dethiobiotin + (sulfur carrier)-SH + 2 reduced [2Fe-2S]-[ferredoxin] + 2 S-adenosyl-L-methionine = (sulfur carrier)-H + biotin + 2 5'-deoxyadenosine + 2 L-methionine + 2 oxidized [2Fe-2S]-[ferredoxin]. It participates in cofactor biosynthesis; biotin biosynthesis; biotin from 7,8-diaminononanoate: step 2/2. Catalyzes the conversion of dethiobiotin (DTB) to biotin by the insertion of a sulfur atom into dethiobiotin via a radical-based mechanism. The polypeptide is Biotin synthase (Prochlorococcus marinus (strain MIT 9515)).